Reading from the N-terminus, the 630-residue chain is 1,4-alpha-glucan branching enzyme GlgB (630 aa).

The active-site Nucleophile is D308. Residue E361 is the Proton donor of the active site.

The protein belongs to the glycosyl hydrolase 13 family. GlgB subfamily. As to quaternary structure, monomer.

It carries out the reaction Transfers a segment of a (1-&gt;4)-alpha-D-glucan chain to a primary hydroxy group in a similar glucan chain.. It participates in glycan biosynthesis; glycogen biosynthesis. Its function is as follows. Catalyzes the formation of the alpha-1,6-glucosidic linkages in glycogen by scission of a 1,4-alpha-linked oligosaccharide from growing alpha-1,4-glucan chains and the subsequent attachment of the oligosaccharide to the alpha-1,6 position. The chain is 1,4-alpha-glucan branching enzyme GlgB from Halothermothrix orenii (strain H 168 / OCM 544 / DSM 9562).